Here is a 418-residue protein sequence, read N- to C-terminus: Pyruvate kinase isozyme G, chloroplastic (418 aa).

2 residues coordinate K(+): D14 and T15. R21 contributes to the ATP binding site. A Mg(2+)-binding site is contributed by E165. Residues G188, D189, and T221 each contribute to the substrate site. D189 provides a ligand contact to Mg(2+).

Belongs to the pyruvate kinase family. The cofactor is Mg(2+). It depends on K(+) as a cofactor. Expressed in developing and germinating endosperm and in roots.

The protein localises to the plastid. The protein resides in the chloroplast. It carries out the reaction pyruvate + ATP = phosphoenolpyruvate + ADP + H(+). It participates in carbohydrate degradation; glycolysis; pyruvate from D-glyceraldehyde 3-phosphate: step 5/5. The protein is Pyruvate kinase isozyme G, chloroplastic of Ricinus communis (Castor bean).